A 404-amino-acid chain; its full sequence is D-galactonate dehydratase family member PC1_0802 (404 aa).

Residues N37 and H122 each coordinate substrate. Y159 acts as the Proton donor/acceptor in catalysis. D212 provides a ligand contact to Mg(2+). The Proton donor/acceptor role is filled by H214. Mg(2+) contacts are provided by E238 and E264. Substrate is bound by residues E264, R285, H314, D318, and E341.

The protein belongs to the mandelate racemase/muconate lactonizing enzyme family. GalD subfamily. Mg(2+) serves as cofactor.

The catalysed reaction is D-mannonate = 2-dehydro-3-deoxy-D-gluconate + H2O. Functionally, has low D-mannonate dehydratase activity (in vitro), suggesting that this is not a physiological substrate and that it has no significant role in D-mannonate degradation in vivo. Has no detectable activity with a panel of 70 other acid sugars (in vitro). This Pectobacterium carotovorum subsp. carotovorum (strain PC1) protein is D-galactonate dehydratase family member PC1_0802.